We begin with the raw amino-acid sequence, 215 residues long: Pyrrolidone-carboxylate peptidase (215 aa).

Catalysis depends on residues Glu-80, Cys-143, and His-167.

It belongs to the peptidase C15 family. Homotetramer.

The protein localises to the cytoplasm. It carries out the reaction Release of an N-terminal pyroglutamyl group from a polypeptide, the second amino acid generally not being Pro.. Its function is as follows. Removes 5-oxoproline from various penultimate amino acid residues except L-proline. This chain is Pyrrolidone-carboxylate peptidase, found in Yersinia pestis bv. Antiqua (strain Antiqua).